The following is a 123-amino-acid chain: Sirohydrochlorin cobaltochelatase (123 aa).

Histidine 9 functions as the Proton acceptor in the catalytic mechanism. Histidine 9 provides a ligand contact to Co(2+). Substrate contacts are provided by residues glutamate 43 and phenylalanine 68 to histidine 73. Histidine 73 lines the Co(2+) pocket.

Belongs to the CbiX family. CbiXS subfamily. Homotetramer; dimer of dimers.

The catalysed reaction is Co-sirohydrochlorin + 2 H(+) = sirohydrochlorin + Co(2+). It participates in cofactor biosynthesis; adenosylcobalamin biosynthesis; cob(II)yrinate a,c-diamide from sirohydrochlorin (anaerobic route): step 1/10. Its function is as follows. Catalyzes the insertion of Co(2+) into sirohydrochlorin as part of the anaerobic pathway to cobalamin biosynthesis. The chain is Sirohydrochlorin cobaltochelatase from Sulfolobus acidocaldarius (strain ATCC 33909 / DSM 639 / JCM 8929 / NBRC 15157 / NCIMB 11770).